A 176-amino-acid polypeptide reads, in one-letter code: Adenine phosphoribosyltransferase (176 aa).

Belongs to the purine/pyrimidine phosphoribosyltransferase family. In terms of assembly, homodimer.

Its subcellular location is the cytoplasm. The catalysed reaction is AMP + diphosphate = 5-phospho-alpha-D-ribose 1-diphosphate + adenine. The protein operates within purine metabolism; AMP biosynthesis via salvage pathway; AMP from adenine: step 1/1. Functionally, catalyzes a salvage reaction resulting in the formation of AMP, that is energically less costly than de novo synthesis. The sequence is that of Adenine phosphoribosyltransferase from Gluconacetobacter diazotrophicus (strain ATCC 49037 / DSM 5601 / CCUG 37298 / CIP 103539 / LMG 7603 / PAl5).